The sequence spans 230 residues: Urease accessory protein UreF (230 aa).

Belongs to the UreF family. As to quaternary structure, ureD, UreF and UreG form a complex that acts as a GTP-hydrolysis-dependent molecular chaperone, activating the urease apoprotein by helping to assemble the nickel containing metallocenter of UreC. The UreE protein probably delivers the nickel.

It is found in the cytoplasm. Functionally, required for maturation of urease via the functional incorporation of the urease nickel metallocenter. This Cupriavidus metallidurans (strain ATCC 43123 / DSM 2839 / NBRC 102507 / CH34) (Ralstonia metallidurans) protein is Urease accessory protein UreF.